The chain runs to 431 residues: Enolase (431 aa).

(2R)-2-phosphoglycerate is bound at residue Gln-163. Glu-205 (proton donor) is an active-site residue. Residues Asp-242, Glu-288, and Asp-315 each coordinate Mg(2+). Residues Lys-340, Arg-369, Ser-370, and Lys-391 each coordinate (2R)-2-phosphoglycerate. Lys-340 (proton acceptor) is an active-site residue.

It belongs to the enolase family. The cofactor is Mg(2+).

It localises to the cytoplasm. The protein localises to the secreted. Its subcellular location is the cell surface. It carries out the reaction (2R)-2-phosphoglycerate = phosphoenolpyruvate + H2O. The protein operates within carbohydrate degradation; glycolysis; pyruvate from D-glyceraldehyde 3-phosphate: step 4/5. Catalyzes the reversible conversion of 2-phosphoglycerate (2-PG) into phosphoenolpyruvate (PEP). It is essential for the degradation of carbohydrates via glycolysis. The chain is Enolase from Bacillus mycoides (strain KBAB4) (Bacillus weihenstephanensis).